We begin with the raw amino-acid sequence, 761 residues long: Xaa-Pro dipeptidyl-peptidase (761 aa).

Catalysis depends on charge relay system residues S349, D469, and H499.

Belongs to the peptidase S15 family. Homodimer.

It is found in the cytoplasm. The enzyme catalyses Hydrolyzes Xaa-Pro-|- bonds to release unblocked, N-terminal dipeptides from substrates including Ala-Pro-|-p-nitroanilide and (sequentially) Tyr-Pro-|-Phe-Pro-|-Gly-Pro-|-Ile.. Functionally, removes N-terminal dipeptides sequentially from polypeptides having unsubstituted N-termini provided that the penultimate residue is proline. This chain is Xaa-Pro dipeptidyl-peptidase, found in Streptococcus equi subsp. equi (strain 4047).